A 372-amino-acid polypeptide reads, in one-letter code: 4-hydroxy-3-methylbut-2-en-1-yl diphosphate synthase (flavodoxin) (372 aa).

C270, C273, C305, and E312 together coordinate [4Fe-4S] cluster.

Belongs to the IspG family. The cofactor is [4Fe-4S] cluster.

The enzyme catalyses (2E)-4-hydroxy-3-methylbut-2-enyl diphosphate + oxidized [flavodoxin] + H2O + 2 H(+) = 2-C-methyl-D-erythritol 2,4-cyclic diphosphate + reduced [flavodoxin]. The protein operates within isoprenoid biosynthesis; isopentenyl diphosphate biosynthesis via DXP pathway; isopentenyl diphosphate from 1-deoxy-D-xylulose 5-phosphate: step 5/6. In terms of biological role, converts 2C-methyl-D-erythritol 2,4-cyclodiphosphate (ME-2,4cPP) into 1-hydroxy-2-methyl-2-(E)-butenyl 4-diphosphate. The protein is 4-hydroxy-3-methylbut-2-en-1-yl diphosphate synthase (flavodoxin) of Shewanella amazonensis (strain ATCC BAA-1098 / SB2B).